The sequence spans 130 residues: Small ribosomal subunit protein uS9 (130 aa).

It belongs to the universal ribosomal protein uS9 family.

The polypeptide is Small ribosomal subunit protein uS9 (Polaromonas naphthalenivorans (strain CJ2)).